Reading from the N-terminus, the 414-residue chain is Dihydroorotase (414 aa).

2 residues coordinate Zn(2+): H56 and H58. Substrate-binding positions include 58–60 and N90; that span reads HFR. 4 residues coordinate Zn(2+): K138, H171, H219, and D280. At K138 the chain carries N6-carboxylysine. D280 is an active-site residue. Residue H284 coordinates substrate.

Belongs to the metallo-dependent hydrolases superfamily. DHOase family. Class I DHOase subfamily. It depends on Zn(2+) as a cofactor.

It catalyses the reaction (S)-dihydroorotate + H2O = N-carbamoyl-L-aspartate + H(+). It functions in the pathway pyrimidine metabolism; UMP biosynthesis via de novo pathway; (S)-dihydroorotate from bicarbonate: step 3/3. Catalyzes the reversible cyclization of carbamoyl aspartate to dihydroorotate. This Thermoplasma acidophilum (strain ATCC 25905 / DSM 1728 / JCM 9062 / NBRC 15155 / AMRC-C165) protein is Dihydroorotase.